Consider the following 151-residue polypeptide: Aspartate carbamoyltransferase regulatory chain (151 aa).

Residues Cys-108, Cys-113, Cys-136, and Cys-139 each contribute to the Zn(2+) site.

This sequence belongs to the PyrI family. In terms of assembly, contains catalytic and regulatory chains. Zn(2+) is required as a cofactor.

Its function is as follows. Involved in allosteric regulation of aspartate carbamoyltransferase. This chain is Aspartate carbamoyltransferase regulatory chain, found in Porphyromonas gingivalis (strain ATCC 33277 / DSM 20709 / CIP 103683 / JCM 12257 / NCTC 11834 / 2561).